The primary structure comprises 712 residues: Amine oxidase [copper-containing] gamma 1 (712 aa).

A signal peptide spans Met-1–Ser-24. Residues Asn-146 and Asn-173 are each glycosylated (N-linked (GlcNAc...) asparagine). Cys-188 and Cys-210 form a disulfide bridge. Residue Tyr-352–Thr-363 coordinates substrate. The Proton acceptor role is filled by Asp-354. A disulfide bridge links Cys-373 with Cys-399. Residue Val-439–Tyr-444 coordinates substrate. The active-site Schiff-base intermediate with substrate; via topaquinone is Tyr-442. Tyr-442 carries the 2',4',5'-topaquinone modification. Cu cation contacts are provided by His-499 and His-501. Residues Asp-508, Met-509, and Asp-510 each coordinate Mn(2+). N-linked (GlcNAc...) asparagine glycans are attached at residues Asn-516 and Asn-617. Positions 651 and 652 each coordinate Mn(2+). His-662 lines the Cu cation pocket.

This sequence belongs to the copper/topaquinone oxidase family. As to quaternary structure, homodimer. It depends on Cu cation as a cofactor. Requires Zn(2+) as cofactor. The cofactor is L-topaquinone. Mn(2+) is required as a cofactor. Post-translationally, topaquinone (TPQ) is generated by copper-dependent autoxidation of a specific tyrosyl residue. Mostly expressed in roots, stems and flowers, and, at lower levels, in leaves and cotyledons.

It is found in the secreted. Its subcellular location is the extracellular space. The protein localises to the apoplast. The enzyme catalyses a primary methyl amine + O2 + H2O = an aldehyde + H2O2 + NH4(+). The protein operates within amine and polyamine degradation; putrescine degradation. Its function is as follows. Copper amine oxidase that can use putrescine and spermidine as substrates. Required for abscisic acid- (ABA) and polyamine- (PA) and H(2)O(2)-dependent induced nitric oxide (NO) biosynthesis. Involved in ABA signal transduction and in responses to osmotic stress. In Arabidopsis thaliana (Mouse-ear cress), this protein is Amine oxidase [copper-containing] gamma 1.